The sequence spans 352 residues: Holliday junction branch migration complex subunit RuvB (352 aa).

The large ATPase domain (RuvB-L) stretch occupies residues 13–201; it reads FSLRKKELRL…FGISQKIEFY (189 aa). Residues Arg-41, Gly-82, Lys-85, Thr-86, Thr-87, 148–150, Arg-191, Tyr-201, and Arg-238 each bind ATP; that span reads EDF. Residue Thr-86 coordinates Mg(2+). The interval 202 to 273 is small ATPAse domain (RuvB-S); the sequence is TYDELKQIIV…LIKKALNSYQ (72 aa). The interval 276-352 is head domain (RuvB-H); the sequence is EKGLDSLDRN…KYIDSKNENF (77 aa). 2 residues coordinate DNA: Arg-330 and Arg-335.

The protein belongs to the RuvB family. Homohexamer. Forms an RuvA(8)-RuvB(12)-Holliday junction (HJ) complex. HJ DNA is sandwiched between 2 RuvA tetramers; dsDNA enters through RuvA and exits via RuvB. An RuvB hexamer assembles on each DNA strand where it exits the tetramer. Each RuvB hexamer is contacted by two RuvA subunits (via domain III) on 2 adjacent RuvB subunits; this complex drives branch migration. In the full resolvosome a probable DNA-RuvA(4)-RuvB(12)-RuvC(2) complex forms which resolves the HJ.

It localises to the cytoplasm. The enzyme catalyses ATP + H2O = ADP + phosphate + H(+). Functionally, the RuvA-RuvB-RuvC complex processes Holliday junction (HJ) DNA during genetic recombination and DNA repair, while the RuvA-RuvB complex plays an important role in the rescue of blocked DNA replication forks via replication fork reversal (RFR). RuvA specifically binds to HJ cruciform DNA, conferring on it an open structure. The RuvB hexamer acts as an ATP-dependent pump, pulling dsDNA into and through the RuvAB complex. RuvB forms 2 homohexamers on either side of HJ DNA bound by 1 or 2 RuvA tetramers; 4 subunits per hexamer contact DNA at a time. Coordinated motions by a converter formed by DNA-disengaged RuvB subunits stimulates ATP hydrolysis and nucleotide exchange. Immobilization of the converter enables RuvB to convert the ATP-contained energy into a lever motion, pulling 2 nucleotides of DNA out of the RuvA tetramer per ATP hydrolyzed, thus driving DNA branch migration. The RuvB motors rotate together with the DNA substrate, which together with the progressing nucleotide cycle form the mechanistic basis for DNA recombination by continuous HJ branch migration. Branch migration allows RuvC to scan DNA until it finds its consensus sequence, where it cleaves and resolves cruciform DNA. The protein is Holliday junction branch migration complex subunit RuvB of Prochlorococcus marinus (strain MIT 9215).